The chain runs to 426 residues: Multifunctional protein ADE2 (426 aa).

The SAICAR synthetase stretch occupies residues 1–261 (MAPAASELKL…WVAERVELLL (261 aa)). The tract at residues 262-426 (KTKSQGRVVV…ADKKLRECTL (165 aa)) is AIR carboxylase.

It in the N-terminal section; belongs to the SAICAR synthetase family. In the C-terminal section; belongs to the AIR carboxylase family. Class II subfamily. Homooctamer.

The enzyme catalyses 5-amino-1-(5-phospho-D-ribosyl)imidazole-4-carboxylate + L-aspartate + ATP = (2S)-2-[5-amino-1-(5-phospho-beta-D-ribosyl)imidazole-4-carboxamido]succinate + ADP + phosphate + 2 H(+). It catalyses the reaction 5-amino-1-(5-phospho-D-ribosyl)imidazole-4-carboxylate + H(+) = 5-amino-1-(5-phospho-beta-D-ribosyl)imidazole + CO2. It participates in purine metabolism; IMP biosynthesis via de novo pathway; 5-amino-1-(5-phospho-D-ribosyl)imidazole-4-carboxamide from 5-amino-1-(5-phospho-D-ribosyl)imidazole-4-carboxylate: step 1/2. It functions in the pathway purine metabolism; IMP biosynthesis via de novo pathway; 5-amino-1-(5-phospho-D-ribosyl)imidazole-4-carboxylate from 5-amino-1-(5-phospho-D-ribosyl)imidazole (carboxylase route): step 1/1. In Gallus gallus (Chicken), this protein is Multifunctional protein ADE2 (AIRC).